A 553-amino-acid chain; its full sequence is Urocanate hydratase (553 aa).

NAD(+) is bound by residues 45–46, Gln-123, 169–171, Asp-189, Arg-194, 235–236, 256–260, 266–267, Tyr-315, and Gly-485; these read GG, GMG, NA, QTSAH, and YV.

It belongs to the urocanase family. It depends on NAD(+) as a cofactor.

Its subcellular location is the cytoplasm. The catalysed reaction is 4-imidazolone-5-propanoate = trans-urocanate + H2O. The protein operates within amino-acid degradation; L-histidine degradation into L-glutamate; N-formimidoyl-L-glutamate from L-histidine: step 2/3. Catalyzes the conversion of urocanate to 4-imidazolone-5-propionate. In Staphylococcus aureus (strain COL), this protein is Urocanate hydratase.